Consider the following 274-residue polypeptide: uncharacterized protein (274 aa).

The N-terminal stretch at 1-17 (MKKLLAGFLTLSLALAA) is a signal peptide. The N-palmitoyl cysteine moiety is linked to residue Cys18. Residue Cys18 is the site of S-diacylglycerol cysteine attachment. Residues 18 to 169 (CSNGSDDDSS…DANNGASSAN (152 aa)) are disordered. A compositionally biased stretch (basic and acidic residues) spans 25-76 (DSSKKDDSSKDNQSSDDKSKDSKNDDKKNNDSDKDKDNNSDSDKNSDSKSDD). Residues 91–169 (SDNASGSDSS…DANNGASSAN (79 aa)) are compositionally biased toward low complexity.

Its subcellular location is the cell membrane. This is an uncharacterized protein from Staphylococcus saprophyticus subsp. saprophyticus (strain ATCC 15305 / DSM 20229 / NCIMB 8711 / NCTC 7292 / S-41).